Consider the following 428-residue polypeptide: NADH-ubiquinone oxidoreductase chain 2 (428 aa).

Transmembrane regions (helical) follow at residues 22–42 (IAFL…LHFG), 59–79 (LDES…VIMN), 84–104 (LGWE…YMLT), 108–128 (LLLM…ILSL), 140–160 (LLSS…FYGL), 185–205 (ILLL…LWVP), 218–238 (WMGS…YPLL), 241–261 (LAPF…VLMA), 269–289 (FLAY…AIGD), 292–312 (AYGY…VLLS), 332–352 (LGLG…FAGF), 356–376 (LLVL…LLIL), 384–404 (YYLK…SAPI), and 408–428 (YPNL…LLLL).

The protein belongs to the complex I subunit 2 family.

It localises to the mitochondrion inner membrane. It carries out the reaction a ubiquinone + NADH + 5 H(+)(in) = a ubiquinol + NAD(+) + 4 H(+)(out). Core subunit of the mitochondrial membrane respiratory chain NADH dehydrogenase (Complex I) that is believed to belong to the minimal assembly required for catalysis. Complex I functions in the transfer of electrons from NADH to the respiratory chain. The immediate electron acceptor for the enzyme is believed to be ubiquinone. The polypeptide is NADH-ubiquinone oxidoreductase chain 2 (Hyaloraphidium curvatum (Lower fungus)).